The sequence spans 397 residues: Elongation factor Tu-1 (397 aa).

The tr-type G domain occupies 10-206 (KPHVNIGTIG…AVDENIPEPE (197 aa)). Residues 19–26 (GHIDHGKT) form a G1 region. Position 19–26 (19–26 (GHIDHGKT)) interacts with GTP. Thr26 contributes to the Mg(2+) binding site. The G2 stretch occupies residues 62-66 (GITIS). The tract at residues 83–86 (DCPG) is G3. Residues 83-87 (DCPGH) and 138-141 (NKAD) each bind GTP. The G4 stretch occupies residues 138–141 (NKAD). The segment at 176 to 178 (SAL) is G5. Thr386 carries the post-translational modification Phosphothreonine.

Belongs to the TRAFAC class translation factor GTPase superfamily. Classic translation factor GTPase family. EF-Tu/EF-1A subfamily. In terms of assembly, monomer. Post-translationally, phosphorylated on threonine and serine.

The protein resides in the cytoplasm. It catalyses the reaction GTP + H2O = GDP + phosphate + H(+). GTP hydrolase that promotes the GTP-dependent binding of aminoacyl-tRNA to the A-site of ribosomes during protein biosynthesis. In Streptomyces collinus, this protein is Elongation factor Tu-1.